A 514-amino-acid polypeptide reads, in one-letter code: Putative fumarate hydratase class I (514 aa).

The [4Fe-4S] cluster site is built by cysteine 62, cysteine 187, and cysteine 274.

It belongs to the class-I fumarase family. Homodimer. [4Fe-4S] cluster is required as a cofactor.

It catalyses the reaction (S)-malate = fumarate + H2O. The protein operates within carbohydrate metabolism; tricarboxylic acid cycle; (S)-malate from fumarate: step 1/1. Catalyzes the reversible hydration of fumarate to (S)-malate. The sequence is that of Putative fumarate hydratase class I (fumA) from Geobacillus stearothermophilus (Bacillus stearothermophilus).